The chain runs to 210 residues: Outer-membrane lipoprotein carrier protein (210 aa).

A signal peptide spans M1 to A26.

The protein belongs to the LolA family. In terms of assembly, monomer.

It localises to the periplasm. Participates in the translocation of lipoproteins from the inner membrane to the outer membrane. Only forms a complex with a lipoprotein if the residue after the N-terminal Cys is not an aspartate (The Asp acts as a targeting signal to indicate that the lipoprotein should stay in the inner membrane). The polypeptide is Outer-membrane lipoprotein carrier protein (Bordetella pertussis (strain Tohama I / ATCC BAA-589 / NCTC 13251)).